Consider the following 327-residue polypeptide: Putative HTH-type transcriptional regulatory protein Mbar_A2318 (327 aa).

One can recognise an HTH cro/C1-type domain in the interval 132 to 190 (LKKARMGQSMSLGTLASMVGVSRRTISKYEEEGMDASIDVVLQLEDIFGVELAKPINIL). Positions 143-162 (LGTLASMVGVSRRTISKYEE) form a DNA-binding region, H-T-H motif.

The sequence is that of Putative HTH-type transcriptional regulatory protein Mbar_A2318 from Methanosarcina barkeri (strain Fusaro / DSM 804).